Reading from the N-terminus, the 604-residue chain is MSAILSADDLNDFISPGVACIKPVETLPPKDTKNQEDAYEVTTEDKVQPEDLPPAQISLTDCLACSGCVTSAEAVLISLQSHAEVLNTLDAHPEIPLTHEPHGVGVNNTEDSKEGKIFVASVSPQVRASLATTYGISEKEAGYMIDQLLSGPQGLRGGGKHGNGFTWVVDTNAMREAVLVLTADEVSDSLNSGESSAMSQSDDSLPKRPILSSACPGWICYAEKTHPFILPHLSRLKSPQALSGTFLKTVLSKSLGVHPSRIWHLAVMPCFDKKLEASREELTDMSWRQGDSSGSESQPVRDVDCVITARELLSLASSRGSSLRDLPLQPLHSSFNPPFPEKTLDSFLSLKRSRAEQSLATGTSGGYLHHVLMTFQARNPGSELVVNRGRNVDVVEYVLMSPEGQPILKAARYYGFRNIQNLVRKLKPARVSRLPGAKPAVRPAAGRRQPMSRNAVSTGSSGSDYAYVEVMACPGGCTNGGGQIRVEDARETLGPSQGESLDASMKPSPHEQRAWLARVDEAYFSMDSESESELETQSQLLSLADKEAKIHERLRSWSEYMNIPLSKLVYTTYRKVESDVGKDQTPANDTSRVVELAGKIGGGW.

6 residues coordinate [4Fe-4S] cluster: Cys20, Cys62, Cys65, Cys68, Cys215, and Cys270. Residues 434–461 (LPGAKPAVRPAAGRRQPMSRNAVSTGSS) are disordered. Residues 451-461 (MSRNAVSTGSS) show a composition bias toward polar residues. Positions 473 and 477 each coordinate [4Fe-4S] cluster.

This sequence belongs to the NARF family.

Its function is as follows. Component of the cytosolic Fe/S protein assembly machinery. Required for maturation of extramitochondrial Fe/S proteins. May play a role in the transfer of pre-assembled Fe/S clusters to target apoproteins. This is Cytosolic Fe-S cluster assembly factor nar1 (nar1) from Penicillium rubens (strain ATCC 28089 / DSM 1075 / NRRL 1951 / Wisconsin 54-1255) (Penicillium chrysogenum).